Reading from the N-terminus, the 259-residue chain is Flap endonuclease Xni (259 aa).

Asp109 serves as a coordination point for Mg(2+). A 5'-3' exonuclease domain is found at 165–255 (VKPQQLSDYW…FNLQDLRFTA (91 aa)). 3 residues coordinate K(+): Leu176, Ile187, and Ile190. The interval 189–194 (GIGPKA) is interaction with DNA.

The protein belongs to the Xni family. It depends on Mg(2+) as a cofactor. Requires K(+) as cofactor.

In terms of biological role, has flap endonuclease activity. During DNA replication, flap endonucleases cleave the 5'-overhanging flap structure that is generated by displacement synthesis when DNA polymerase encounters the 5'-end of a downstream Okazaki fragment. The protein is Flap endonuclease Xni of Vibrio vulnificus (strain YJ016).